The following is a 554-amino-acid chain: Malate synthase 2 (554 aa).

The Proton acceptor role is filled by R177. Catalysis depends on D457, which acts as the Proton donor. The short motif at 552–554 (SKL) is the SKL peroxisome targeting motif element.

Belongs to the malate synthase family. As to quaternary structure, interacts with PEX9.

Its subcellular location is the peroxisome matrix. It catalyses the reaction glyoxylate + acetyl-CoA + H2O = (S)-malate + CoA + H(+). Functionally, allantoin metabolism-specific malate synthase involved in the recycling the glyoxylate generated during allantoin degradation by the ureidoglycollate (UG) hydrolase reaction. The chain is Malate synthase 2 from Saccharomyces cerevisiae (strain ATCC 204508 / S288c) (Baker's yeast).